Reading from the N-terminus, the 392-residue chain is GTPase Obg (392 aa).

One can recognise an Obg domain in the interval 1–159 (MKFVDEAEIR…RNLKLELMLL (159 aa)). Residues 121–146 (GFHGLGNTRFKSSTNRAPRQKTNGTP) are disordered. Residues 129-145 (RFKSSTNRAPRQKTNGT) show a composition bias toward polar residues. The OBG-type G domain occupies 160-333 (ADVGLLGMPN…LCNDVMDFIE (174 aa)). GTP contacts are provided by residues 166-173 (GMPNAGKS), 191-195 (FTTLV), 213-216 (DIPG), 283-286 (NKVD), and 314-316 (SAF). Serine 173 and threonine 193 together coordinate Mg(2+).

The protein belongs to the TRAFAC class OBG-HflX-like GTPase superfamily. OBG GTPase family. As to quaternary structure, monomer. It depends on Mg(2+) as a cofactor.

It is found in the cytoplasm. In terms of biological role, an essential GTPase which binds GTP, GDP and possibly (p)ppGpp with moderate affinity, with high nucleotide exchange rates and a fairly low GTP hydrolysis rate. Plays a role in control of the cell cycle, stress response, ribosome biogenesis and in those bacteria that undergo differentiation, in morphogenesis control. The sequence is that of GTPase Obg from Alteromonas mediterranea (strain DSM 17117 / CIP 110805 / LMG 28347 / Deep ecotype).